A 689-amino-acid polypeptide reads, in one-letter code: Protein-glutamine gamma-glutamyltransferase 2 (689 aa).

Active-site residues include C278, H336, and D359. Ca(2+)-binding residues include N399, D401, E437, E447, and E452. A disordered region spans residues 427–453 (STKSVGRDSREDITHTYKYPEGSEKER). Residues 431–441 (VGRDSREDITH) are compositionally biased toward basic and acidic residues. 476-483 (RIKLSEGA) is a GTP binding site. E539 contributes to the Ca(2+) binding site. 580-583 (RDVY) provides a ligand contact to GTP.

Belongs to the transglutaminase superfamily. Transglutaminase family. In terms of assembly, monomer. Requires Ca(2+) as cofactor. Predominates in mature erythrocytes. Also found in kidney and cardiac muscle.

Its subcellular location is the cytoplasm. The protein localises to the cytosol. The protein resides in the nucleus. It is found in the chromosome. It localises to the secreted. Its subcellular location is the extracellular space. The protein localises to the extracellular matrix. The protein resides in the cell membrane. It is found in the mitochondrion. The catalysed reaction is L-glutaminyl-[protein] + L-lysyl-[protein] = [protein]-L-lysyl-N(6)-5-L-glutamyl-[protein] + NH4(+). The enzyme catalyses L-glutaminyl-[protein] + serotonin = 5-serotonyl-L-glutamyl-[protein] + NH4(+). It carries out the reaction L-glutaminyl-[protein] + dopamine = 5-dopaminyl-L-glutamyl-[protein] + NH4(+). It catalyses the reaction L-glutaminyl-[protein] + histamine = 5-histaminyl-L-glutamyl-[protein] + NH4(+). The catalysed reaction is L-glutaminyl-[protein] + (R)-noradrenaline = 5-(R)-noradrenalinyl-L-glutamyl-[protein] + NH4(+). The enzyme catalyses L-glutaminyl-[protein] + H2O = L-glutamyl-[protein] + NH4(+). Its activity is regulated as follows. Acyltransferase activity is regulated by the binding of GTP and Ca(2+): inactivated by GTP, which stabilizes its closed structure, thereby obstructing the accessibility of substrates to the active sites. In contrast, Ca(2+) acts as a cofactor by inducing conformational change to the active open form. In absence of Ca(2+), Mg(2+) may bind Ca(2+)-binding sites, promoting GTP-binding and subsequent inhibition of the acyltransferase activity. Functionally, calcium-dependent acyltransferase that catalyzes the formation of covalent bonds between peptide-bound glutamine and various primary amines, such as gamma-amino group of peptide-bound lysine, or mono- and polyamines, thereby producing cross-linked or aminated proteins, respectively. Involved in many biological processes, such as bone development, angiogenesis, wound healing, cellular differentiation, chromatin modification and apoptosis. Acts as a protein-glutamine gamma-glutamyltransferase by mediating the cross-linking of proteins: under physiological conditions, the protein cross-linking activity is inhibited by GTP; inhibition is relieved by Ca(2+) in response to various stresses. When secreted, catalyzes cross-linking of proteins of the extracellular matrix, resulting in the formation of scaffolds. Plays a key role during apoptosis, both by (1) promoting the cross-linking of cytoskeletal proteins resulting in condensation of the cytoplasm, and by (2) mediating cross-linking proteins of the extracellular matrix, resulting in the irreversible formation of scaffolds that stabilize the integrity of the dying cells before their clearance by phagocytosis, thereby preventing the leakage of harmful intracellular components. In addition to protein cross-linking, can use different monoamine substrates to catalyze a vast array of protein post-translational modifications: mediates aminylation of serotonin, dopamine, noradrenaline or histamine into glutamine residues of target proteins to generate protein serotonylation, dopaminylation, noradrenalinylation or histaminylation, respectively. Mediates protein serotonylation of small GTPases during activation and aggregation of platelets, leading to constitutive activation of these GTPases. Plays a key role in chromatin organization by mediating serotonylation and dopaminylation of histone H3. Catalyzes serotonylation of 'Gln-5' of histone H3 (H3Q5ser) during serotonergic neuron differentiation, thereby facilitating transcription. Acts as a mediator of neurotransmission-independent role of nuclear dopamine in ventral tegmental area (VTA) neurons: catalyzes dopaminylation of 'Gln-5' of histone H3 (H3Q5dop), thereby regulating relapse-related transcriptional plasticity in the reward system. Also acts as a protein deamidase by mediating the side chain deamidation of specific glutamine residues of proteins to glutamate. May also act as an isopeptidase cleaving the previously formed cross-links. Also able to participate in signaling pathways independently of its acyltransferase activity: acts as a signal transducer in alpha-1 adrenergic receptor-mediated stimulation of phospholipase C-delta (PLCD) activity and is required for coupling alpha-1 adrenergic agonists to the stimulation of phosphoinositide lipid metabolism. The protein is Protein-glutamine gamma-glutamyltransferase 2 of Gallus gallus (Chicken).